A 230-amino-acid polypeptide reads, in one-letter code: Sugar fermentation stimulation protein homolog (230 aa).

Belongs to the SfsA family.

In Clostridium botulinum (strain Loch Maree / Type A3), this protein is Sugar fermentation stimulation protein homolog.